The following is a 420-amino-acid chain: Serine hydroxymethyltransferase (420 aa).

Residues Leu-121 and 125 to 127 (GHL) contribute to the (6S)-5,6,7,8-tetrahydrofolate site. Lys-230 carries the post-translational modification N6-(pyridoxal phosphate)lysine. (6S)-5,6,7,8-tetrahydrofolate-binding positions include Glu-246 and 354 to 356 (SPF).

This sequence belongs to the SHMT family. As to quaternary structure, homodimer. Pyridoxal 5'-phosphate is required as a cofactor.

Its subcellular location is the cytoplasm. The enzyme catalyses (6R)-5,10-methylene-5,6,7,8-tetrahydrofolate + glycine + H2O = (6S)-5,6,7,8-tetrahydrofolate + L-serine. Its pathway is one-carbon metabolism; tetrahydrofolate interconversion. It functions in the pathway amino-acid biosynthesis; glycine biosynthesis; glycine from L-serine: step 1/1. Its function is as follows. Catalyzes the reversible interconversion of serine and glycine with tetrahydrofolate (THF) serving as the one-carbon carrier. This reaction serves as the major source of one-carbon groups required for the biosynthesis of purines, thymidylate, methionine, and other important biomolecules. Also exhibits THF-independent aldolase activity toward beta-hydroxyamino acids, producing glycine and aldehydes, via a retro-aldol mechanism. This is Serine hydroxymethyltransferase from Rickettsia rickettsii (strain Iowa).